Here is a 440-residue protein sequence, read N- to C-terminus: Glycerate 2-kinase (440 aa).

K58 contributes to the substrate binding site.

It belongs to the glycerate kinase type-1 family. Homodimer. It depends on Mg(2+) as a cofactor. Ni(2+) is required as a cofactor. Mn(2+) serves as cofactor. The cofactor is Co(2+).

It catalyses the reaction (R)-glycerate + ATP = (2R)-2-phosphoglycerate + ADP + H(+). Functionally, catalyzes the ATP-dependent phosphorylation of D-glycerate to 2-phosphoglycerate. It can also utilize GTP, CTP, UTP, ADP or pyrophosphate as phosphate donor. This Pyrococcus horikoshii (strain ATCC 700860 / DSM 12428 / JCM 9974 / NBRC 100139 / OT-3) protein is Glycerate 2-kinase (gck).